The following is a 387-amino-acid chain: N-acetylglucosamine-6-phosphate deacetylase (387 aa).

A divalent metal cation contacts are provided by histidine 62, histidine 64, and glutamate 132. 143-144 (AQ) contributes to the substrate binding site. A divalent metal cation is bound by residues histidine 198 and histidine 219. Substrate is bound by residues 222–223 (NQ), arginine 230, and 251–254 (DFIH). Aspartate 277 contributes to the a divalent metal cation binding site. The Proton donor/acceptor role is filled by aspartate 277. Substrate is bound at residue 310 to 312 (LAG).

The protein belongs to the metallo-dependent hydrolases superfamily. NagA family. In terms of assembly, homodimer. The cofactor is a divalent metal cation.

The enzyme catalyses N-acetyl-D-glucosamine 6-phosphate + H2O = D-glucosamine 6-phosphate + acetate. Its pathway is amino-sugar metabolism; N-acetylneuraminate degradation; D-fructose 6-phosphate from N-acetylneuraminate: step 4/5. Functionally, involved in the first committed step in the biosynthesis of amino-sugar-nucleotides. Catalyzes the hydrolysis of the N-acetyl group of N-acetylglucosamine-6-phosphate (GlcNAc-6-P) to yield glucosamine 6-phosphate and acetate. The chain is N-acetylglucosamine-6-phosphate deacetylase (nagA) from Lysinibacillus sphaericus (Bacillus sphaericus).